Consider the following 185-residue polypeptide: Ribosome-recycling factor (185 aa).

The protein belongs to the RRF family.

The protein localises to the cytoplasm. In terms of biological role, responsible for the release of ribosomes from messenger RNA at the termination of protein biosynthesis. May increase the efficiency of translation by recycling ribosomes from one round of translation to another. In Aeromonas salmonicida (strain A449), this protein is Ribosome-recycling factor.